A 440-amino-acid polypeptide reads, in one-letter code: Lipopolysaccharide-processing protein LpsZ (440 aa).

This sequence to E.coli capsule polysaccharide export protein KpsC.

It localises to the cytoplasm. In terms of biological role, involved in the invasion of nitrogen fixation nodules. May be involved in the biosynthesis of lipopolysaccharides as an enzyme or a regulatory protein. This chain is Lipopolysaccharide-processing protein LpsZ (lpsZ), found in Rhizobium meliloti (Ensifer meliloti).